We begin with the raw amino-acid sequence, 694 residues long: Elongation factor G (694 aa).

The tr-type G domain occupies 6–288 (KLYRNIGIAA…GVIEYLPSPT (283 aa)). GTP is bound by residues 15 to 22 (AHVDAGKT), 86 to 90 (DTPGH), and 140 to 143 (NKMD).

Belongs to the TRAFAC class translation factor GTPase superfamily. Classic translation factor GTPase family. EF-G/EF-2 subfamily.

The protein resides in the cytoplasm. Functionally, catalyzes the GTP-dependent ribosomal translocation step during translation elongation. During this step, the ribosome changes from the pre-translocational (PRE) to the post-translocational (POST) state as the newly formed A-site-bound peptidyl-tRNA and P-site-bound deacylated tRNA move to the P and E sites, respectively. Catalyzes the coordinated movement of the two tRNA molecules, the mRNA and conformational changes in the ribosome. The protein is Elongation factor G of Legionella pneumophila (strain Paris).